The chain runs to 910 residues: Anoctamin-6 (910 aa).

The Cytoplasmic portion of the chain corresponds to 1–300 (MKKMSRNVLL…YGEKIGIYFA (300 aa)). Residues 301-321 (WLGYYTQMLLLAAVVGVACFL) form a helical membrane-spanning segment. The Extracellular segment spans residues 322–375 (YGYLNQDNCTWSKEVCHPDIGGKIIMCPQCDRLCPFWKLNITCESSKKLCIFDS). A glycan (N-linked (GlcNAc...) asparagine) is linked at N329. 5 disulfides stabilise this stretch: C330-C371, C337-C364, C348-C806, C351-C355, and C595-C600. N361 carries an N-linked (GlcNAc...) asparagine glycan. A helical membrane pass occupies residues 376–396 (FGTLVFAVFMGVWVTLFLEFW). At 397-455 (KRRQAELEYEWDTVELQQEEQARPEYEARCTHVVINEITQEEERIPFTAWGKCIRITLC) the chain is on the cytoplasmic side. Residues 456-476 (ASAVFFWILLIIASVIGIIVY) form a helical membrane-spanning segment. The Extracellular portion of the chain corresponds to 477–509 (RLSVFIVFSAKLPKNINGTDPIQKYLTPQTATS). A glycan (N-linked (GlcNAc...) asparagine) is linked at N493. The helical transmembrane segment at 510–530 (ITASIISFIIIMILNTIYEKV) threads the bilayer. Residues 531–551 (AIMITNFELPRTQTDYENSLT) are Cytoplasmic-facing. A helical transmembrane segment spans residues 552–572 (MKMFLFQFVNYYSSCFYIAFF). At 573-601 (KGKFVGYPGDPVYWLGKYRNEECDPGGCL) the chain is on the extracellular side. Residues 602–621 (LELTTQLTIIMGGKAIWNNI) form a helical membrane-spanning segment. Topologically, residues 622–663 (QEVLLPWIMNLIGRFHRVSGSEKITPRWEQDYHLQPMGKLGL) are cytoplasmic. Residues E623, E666, and E669 each contribute to the Ca(2+) site. The next 2 helical transmembrane spans lie at 664–684 (FYEY…VASF) and 685–705 (PLAP…DAWK). Topologically, residues 706-722 (LTTQFRRLVPEKAQDIG) are cytoplasmic. Residues 723–743 (AWQPIMQGIAILAVVTNAMII) traverse the membrane as a helical segment. The Extracellular portion of the chain corresponds to 744–836 (AFTSDMIPRL…YWHVIAAKLA (93 aa)). Residues N777, N790, and N802 are each glycosylated (N-linked (GlcNAc...) asparagine). A helical membrane pass occupies residues 837 to 857 (FIIVMEHVIYSVKFFISYAIP). Over 858 to 910 (DVSKRTKSKIQREKYLTQKLLHENHLKDMTKNMGVIAERMIEAVDNNLRPKSE) the chain is Cytoplasmic.

It belongs to the anoctamin family. In terms of assembly, homodimer. In terms of tissue distribution, expressed in embryonic stem cell, fetal liver, retina, chronic myologenous leukemia and intestinal cancer.

It is found in the cell membrane. The enzyme catalyses a 1,2-diacyl-sn-glycero-3-phospho-L-serine(in) = a 1,2-diacyl-sn-glycero-3-phospho-L-serine(out). It catalyses the reaction a beta-D-galactosyl-(1&lt;-&gt;1')-N-acylsphing-4-enine(out) = a beta-D-galactosyl-(1&lt;-&gt;1')-N-acylsphing-4-enine(in). It carries out the reaction a 1,2-diacyl-sn-glycero-3-phosphocholine(in) = a 1,2-diacyl-sn-glycero-3-phosphocholine(out). Its activity is regulated as follows. Exhibits synergistic gating by Ca(2+) and voltage. Inhibited by some non-specific cation channel blockers such as: ruthenium red, 2-aminoethyl diphenylborinate (2APB), gadolinium and cadmium ions. (Microbial infection) Activated by SARS coronavirus-2/SARS-CoV-2 spike protein. Its function is as follows. Small-conductance calcium-activated nonselective cation (SCAN) channel which acts as a regulator of phospholipid scrambling in platelets and osteoblasts. Phospholipid scrambling results in surface exposure of phosphatidylserine which in platelets is essential to trigger the clotting system whereas in osteoblasts is essential for the deposition of hydroxyapatite during bone mineralization. Has calcium-dependent phospholipid scramblase activity; scrambles phosphatidylserine, phosphatidylcholine and galactosylceramide. Can generate outwardly rectifying chloride channel currents in airway epithelial cells and Jurkat T lymphocytes. (Microbial infection) Upon SARS coronavirus-2/SARS-CoV-2 infection, is activated by spike protein which increases the amplitude of spontaneous Ca(2+) signals and is required for spike-mediated syncytia. The protein is Anoctamin-6 of Homo sapiens (Human).